Here is a 185-residue protein sequence, read N- to C-terminus: Alkyl hydroperoxide reductase AhpD (185 aa).

The active-site Proton donor is the C131. A disulfide bridge links C131 with C134. Residue C134 is the Cysteine sulfenic acid (-SOH) intermediate of the active site.

Belongs to the AhpD family. In terms of assembly, homotrimer.

The enzyme catalyses N(6)-[(R)-dihydrolipoyl]-L-lysyl-[lipoyl-carrier protein] + a hydroperoxide = N(6)-[(R)-lipoyl]-L-lysyl-[lipoyl-carrier protein] + an alcohol + H2O. In terms of biological role, antioxidant protein with alkyl hydroperoxidase activity. Required for the reduction of the AhpC active site cysteine residues and for the regeneration of the AhpC enzyme activity. The sequence is that of Alkyl hydroperoxide reductase AhpD from Frankia alni (strain DSM 45986 / CECT 9034 / ACN14a).